The primary structure comprises 180 residues: Inner membrane-spanning protein YciB (180 aa).

6 consecutive transmembrane segments (helical) span residues 4–24 (LLSEIGPVVAFFAGFFYGGGI), 25–45 (QSATLYMLITSVICITLCYII), 52–72 (LSIISTAVLLVSGIITLISGD), 76–96 (IKIKPTILYVIFGIIFLTSGI), 118–138 (ITLSYRTATFFFFMAIVNEIV), and 150–170 (FKVFGVVPITFVFILLQLPLL).

The protein belongs to the YciB family.

It is found in the cell inner membrane. Its function is as follows. Plays a role in cell envelope biogenesis, maintenance of cell envelope integrity and membrane homeostasis. This chain is Inner membrane-spanning protein YciB, found in Rickettsia bellii (strain RML369-C).